Consider the following 786-residue polypeptide: Endonuclease MutS2 (786 aa).

332 to 339 provides a ligand contact to ATP; that stretch reads GPNTGGKT. Positions 710–785 constitute a Smr domain; the sequence is VDLRGLDAEE…GDGVTMVELK (76 aa).

This sequence belongs to the DNA mismatch repair MutS family. MutS2 subfamily. As to quaternary structure, homodimer. Binds to stalled ribosomes, contacting rRNA.

Endonuclease that is involved in the suppression of homologous recombination and thus may have a key role in the control of bacterial genetic diversity. Its function is as follows. Acts as a ribosome collision sensor, splitting the ribosome into its 2 subunits. Detects stalled/collided 70S ribosomes which it binds and splits by an ATP-hydrolysis driven conformational change. Acts upstream of the ribosome quality control system (RQC), a ribosome-associated complex that mediates the extraction of incompletely synthesized nascent chains from stalled ribosomes and their subsequent degradation. Probably generates substrates for RQC. The chain is Endonuclease MutS2 from Clostridium beijerinckii (strain ATCC 51743 / NCIMB 8052) (Clostridium acetobutylicum).